The primary structure comprises 285 residues: Methylamine utilization protein MauF (285 aa).

The next 7 membrane-spanning stretches (helical) occupy residues 39–59, 63–83, 120–140, 144–164, 184–204, 209–229, and 265–285; these read LGGL…LSQT, GVAV…LSTW, AVGA…LGFG, FGAL…QLGF, FPVW…YLTY, ILYL…AILL, and ALLD…FAAL.

The protein resides in the cell membrane. It functions in the pathway one-carbon metabolism; methylamine degradation. This is Methylamine utilization protein MauF (mauF) from Methylorubrum extorquens (strain ATCC 14718 / DSM 1338 / JCM 2805 / NCIMB 9133 / AM1) (Methylobacterium extorquens).